A 386-amino-acid chain; its full sequence is Threonine--tRNA ligase editing subunit (386 aa).

This sequence belongs to the class-II aminoacyl-tRNA synthetase family. Archaea-specific ThrRS editing domain subfamily. As to quaternary structure, probably interacts with its catalytic subunit (AC Q97VW8); a subunit fusion (in the order edit-catalytic) is fully functional.

Its subcellular location is the cytoplasm. Freestanding tRNA editing subunit of threonine--tRNA ligase, the catalytic subunit is AC Q97VW8. Deacylates (edits) mischarged L-seryl-tRNA(Thr) in trans, removing L-serine, has no aminoacylation activity. In vitro when both subunits are present, or if the 2 subunits are fused, L-seryl-tRNA(Thr) is no longer produced. Has no activity on correctly acylated L-seryl-tRNA(Ser) or L-threonyl-tRNA(Thr). Editing is probably catalyzed by the 2'-OH of A76 of tRNA(Thr). The chain is Threonine--tRNA ligase editing subunit from Saccharolobus solfataricus (strain ATCC 35092 / DSM 1617 / JCM 11322 / P2) (Sulfolobus solfataricus).